We begin with the raw amino-acid sequence, 1028 residues long: Exportin-T (1028 aa).

The protein belongs to the exportin family.

The protein localises to the nucleus. The protein resides in the cytoplasm. TRNA nucleus export receptor which facilitates tRNA translocation across the nuclear pore complex. Involved in pre-tRNA splicing, probably by affecting the interaction of pre-tRNA with splicing endonuclease. The chain is Exportin-T (los1) from Aspergillus terreus (strain NIH 2624 / FGSC A1156).